We begin with the raw amino-acid sequence, 123 residues long: Large ribosomal subunit protein uL18 (123 aa).

This sequence belongs to the universal ribosomal protein uL18 family. As to quaternary structure, part of the 50S ribosomal subunit; part of the 5S rRNA/L5/L18/L25 subcomplex. Contacts the 5S and 23S rRNAs.

Its function is as follows. This is one of the proteins that bind and probably mediate the attachment of the 5S RNA into the large ribosomal subunit, where it forms part of the central protuberance. In Wolbachia sp. subsp. Brugia malayi (strain TRS), this protein is Large ribosomal subunit protein uL18.